The sequence spans 375 residues: Growth/differentiation factor 8 (375 aa).

Residues 1-18 (MQKLQISVYIYLFMLIVA) form the signal peptide. The propeptide occupies 19–266 (GPVDLNENSE…VTDTPKRSRR (248 aa)). N71 is a glycosylation site (N-linked (GlcNAc...) asparagine). 4 disulfide bridges follow: C272–C282, C281–C340, C309–C372, and C313–C374.

It belongs to the TGF-beta family. As to quaternary structure, homodimer; disulfide-linked. Interacts with WFIKKN2, leading to inhibit its activity. Interacts with FSTL3. Synthesized as large precursor molecule that undergoes proteolytic cleavage to generate an N-terminal propeptide and a disulfide linked C-terminal dimer, which is the biologically active molecule. The circulating form consists of a latent complex of the C-terminal dimer and other proteins, including its propeptide, which maintain the C-terminal dimer in a latent, inactive state. Ligand activation requires additional cleavage of the prodomain by a tolloid-like metalloproteinase.

The protein localises to the secreted. Acts specifically as a negative regulator of skeletal muscle growth. This chain is Growth/differentiation factor 8 (MSTN), found in Lepus capensis (Brown hare).